A 151-amino-acid polypeptide reads, in one-letter code: Endoribonuclease YbeY (151 aa).

Zn(2+)-binding residues include His108, His112, and Asp118.

The protein belongs to the endoribonuclease YbeY family. It depends on Zn(2+) as a cofactor.

It localises to the cytoplasm. Functionally, single strand-specific metallo-endoribonuclease involved in late-stage 70S ribosome quality control and in maturation of the 3' terminus of the 16S rRNA. The chain is Endoribonuclease YbeY from Porphyromonas gingivalis (strain ATCC BAA-308 / W83).